A 190-amino-acid chain; its full sequence is Hypoxanthine/guanine phosphoribosyltransferase (190 aa).

Belongs to the purine/pyrimidine phosphoribosyltransferase family. Archaeal HPRT subfamily. In terms of assembly, homodimer.

The protein resides in the cytoplasm. The enzyme catalyses IMP + diphosphate = hypoxanthine + 5-phospho-alpha-D-ribose 1-diphosphate. The catalysed reaction is GMP + diphosphate = guanine + 5-phospho-alpha-D-ribose 1-diphosphate. Its pathway is purine metabolism; IMP biosynthesis via salvage pathway; IMP from hypoxanthine: step 1/1. Its function is as follows. Catalyzes a salvage reaction resulting in the formation of IMP that is energically less costly than de novo synthesis. The polypeptide is Hypoxanthine/guanine phosphoribosyltransferase (Methanohalophilus mahii (strain ATCC 35705 / DSM 5219 / SLP)).